The following is a 66-amino-acid chain: Large ribosomal subunit protein uL29 (66 aa).

The protein belongs to the universal ribosomal protein uL29 family.

This chain is Large ribosomal subunit protein uL29, found in Geobacillus kaustophilus (strain HTA426).